The chain runs to 232 residues: Orotidine 5'-phosphate decarboxylase (232 aa).

Substrate is bound by residues aspartate 12, lysine 34, 61–70 (DMKLLDIDNT), threonine 116, arginine 177, glutamine 186, glycine 206, and arginine 207. The active-site Proton donor is lysine 63.

This sequence belongs to the OMP decarboxylase family. Type 1 subfamily. Homodimer.

It catalyses the reaction orotidine 5'-phosphate + H(+) = UMP + CO2. Its pathway is pyrimidine metabolism; UMP biosynthesis via de novo pathway; UMP from orotate: step 2/2. Functionally, catalyzes the decarboxylation of orotidine 5'-monophosphate (OMP) to uridine 5'-monophosphate (UMP). In Sinorhizobium medicae (strain WSM419) (Ensifer medicae), this protein is Orotidine 5'-phosphate decarboxylase.